The chain runs to 361 residues: Chorismate synthase (361 aa).

Arg48 contributes to the NADP(+) binding site. Residues 126–128, Gly269, 302–306, and Asn328 contribute to the FMN site; these read RSS and KPVPS.

The protein belongs to the chorismate synthase family. As to quaternary structure, homotetramer. Requires FMNH2 as cofactor.

The catalysed reaction is 5-O-(1-carboxyvinyl)-3-phosphoshikimate = chorismate + phosphate. It participates in metabolic intermediate biosynthesis; chorismate biosynthesis; chorismate from D-erythrose 4-phosphate and phosphoenolpyruvate: step 7/7. Catalyzes the anti-1,4-elimination of the C-3 phosphate and the C-6 proR hydrogen from 5-enolpyruvylshikimate-3-phosphate (EPSP) to yield chorismate, which is the branch point compound that serves as the starting substrate for the three terminal pathways of aromatic amino acid biosynthesis. This reaction introduces a second double bond into the aromatic ring system. The sequence is that of Chorismate synthase from Treponema denticola (strain ATCC 35405 / DSM 14222 / CIP 103919 / JCM 8153 / KCTC 15104).